The sequence spans 324 residues: Olfactory receptor 52I1 (324 aa).

Topologically, residues 1–29 (MLGPAYNHTMETPASFLLVGIPGLQSSHL) are extracellular. N-linked (GlcNAc...) asparagine glycosylation occurs at N7. Residues 30-50 (WLAISLSAMYITALLGNTLIV) traverse the membrane as a helical segment. Residues 51 to 58 (TAIWMDST) lie on the Cytoplasmic side of the membrane. A helical membrane pass occupies residues 59–79 (RHEPMYCFLCVLAAVDIVMAS). Topologically, residues 80 to 103 (SVVPKMVSIFCSGDSSISFSACFT) are extracellular. An intrachain disulfide couples C101 to C193. Residues 104–124 (QMFFVHLATAVETGLLLTMAF) form a helical membrane-spanning segment. At 125–143 (DRYVAICKPLHYKRILTPQ) the chain is on the cytoplasmic side. Residues 144–164 (VMLGMSMAVTIRAVTFMTPLS) form a helical membrane-spanning segment. The Extracellular portion of the chain corresponds to 165-200 (WMMNHLPFCGSNVVVHSYCKHIALARLACADPVPSS). Residues 201–221 (LYSLIGSSLMVGSDVAFIAAS) form a helical membrane-spanning segment. Residues 222 to 241 (YILILRAVFDLSSKTAQLKA) lie on the Cytoplasmic side of the membrane. The chain crosses the membrane as a helical span at residues 242–262 (LSTCGSHVGVMALYYLPGMAS). The Extracellular segment spans residues 263–278 (IYAAWLGQDIVPLHTQ). The helical transmembrane segment at 279–299 (VLLADLYVIIPATLNPIIYGM) threads the bilayer. Topologically, residues 300–324 (RTKQLLEGIWSYLMHFLFDHSNLGS) are cytoplasmic.

The protein belongs to the G-protein coupled receptor 1 family.

Its subcellular location is the cell membrane. Functionally, odorant receptor. This Homo sapiens (Human) protein is Olfactory receptor 52I1 (OR52I1).